The following is a 471-amino-acid chain: Putative multidrug resistance protein MdtD (471 aa).

Residues 1 to 11 lie on the Periplasmic side of the membrane; that stretch reads MTDLPDSTRWQ. A helical transmembrane segment spans residues 12 to 32; that stretch reads LWIVAFGFFMQSLDTTIVNTA. Topologically, residues 33 to 48 are cytoplasmic; sequence LPSMAQSLGESPLHMH. Residues 49–69 form a helical membrane-spanning segment; sequence MVIVSYVLTVAVMLPASGWLA. Topologically, residues 70-76 are periplasmic; it reads DKVGVRN. A helical transmembrane segment spans residues 77 to 97; the sequence is IFFTAIVLFTLGSLFCALSAT. Residues 98–101 are Cytoplasmic-facing; that stretch reads LNEL. The helical transmembrane segment at 102–124 threads the bilayer; that stretch reads LLARALQGVGGAMMVPVGRLTVM. Topologically, residues 125-137 are periplasmic; the sequence is KIVPREQYMAAMT. The chain crosses the membrane as a helical span at residues 138–158; sequence FVTLPGQVGPLLGPALGGLLV. The Cytoplasmic segment spans residues 159–164; it reads EYASWH. Residues 165–185 form a helical membrane-spanning segment; that stretch reads WIFLINIPVGIIGAIATLMLM. The Periplasmic portion of the chain corresponds to 186-196; the sequence is PNYTMQTRRFD. A helical membrane pass occupies residues 197 to 217; the sequence is LSGFLLLAVGMAVLTLALDGS. At 218–224 the chain is on the cytoplasmic side; that stretch reads KGTGLSP. A helical transmembrane segment spans residues 225–245; that stretch reads LAIAGLAAIGVVALVLYLLHA. Residues 246-262 lie on the Periplasmic side of the membrane; it reads RNNNRALFSLKLFRTRT. Residues 263–283 form a helical membrane-spanning segment; that stretch reads FSLGLAGSFAGRIGSGMLPFM. The Cytoplasmic portion of the chain corresponds to 284–285; it reads TP. Residues 286–306 form a helical membrane-spanning segment; sequence VFLQIGLGFSPFHAGLMMIPM. At 307–341 the chain is on the periplasmic side; the sequence is VLGSMGMKRIVVQVVNRFGYRRVLVATTLGLSLVT. A helical membrane pass occupies residues 342–362; the sequence is LLFMTTALLGWYYVLPFVLFL. Over 363–395 the chain is Cytoplasmic; sequence QGMVNSTRFSSMNTLTLKDLPDNLASSGNSLLS. Residues 396–416 traverse the membrane as a helical segment; that stretch reads MIMQLSMSIGVTIAGLLLGLF. The Periplasmic segment spans residues 417–430; that stretch reads GSQHVSVDSSTTQT. Residues 431–451 form a helical membrane-spanning segment; it reads VFMYTWLSMALIIALPAFIFA. The Cytoplasmic segment spans residues 452 to 471; the sequence is RVPNDTHQNVAISRRKRSAQ.

It belongs to the major facilitator superfamily. TCR/Tet family.

The protein localises to the cell inner membrane. The protein is Putative multidrug resistance protein MdtD of Escherichia fergusonii (strain ATCC 35469 / DSM 13698 / CCUG 18766 / IAM 14443 / JCM 21226 / LMG 7866 / NBRC 102419 / NCTC 12128 / CDC 0568-73).